Reading from the N-terminus, the 73-residue chain is Large ribosomal subunit protein bL31 (73 aa).

Belongs to the bacterial ribosomal protein bL31 family. Type A subfamily. As to quaternary structure, part of the 50S ribosomal subunit. Contacts protein L9.

Binds the 23S rRNA and interacts with the tRNA in the E site. This chain is Large ribosomal subunit protein bL31 (rpmE), found in Deinococcus radiodurans (strain ATCC 13939 / DSM 20539 / JCM 16871 / CCUG 27074 / LMG 4051 / NBRC 15346 / NCIMB 9279 / VKM B-1422 / R1).